A 141-amino-acid polypeptide reads, in one-letter code: Cystatin (141 aa).

The first 26 residues, 1–26, serve as a signal peptide directing secretion; it reads MVHSQLPVAGPLRLLCALLLLPSATM. A Cystatin domain is found at 29-129; that stretch reads GGLSPRSVTD…CRFQVWSRPW (101 aa). The short motif at 73 to 77 is the Secondary area of contact element; sequence QVVSG. Cystine bridges form between cysteine 91-cysteine 107 and cysteine 120-cysteine 140.

It belongs to the cystatin family. In terms of tissue distribution, expressed at a low level by the venom gland (at protein level).

It is found in the secreted. Its function is as follows. Inhibits various C1 cysteine proteases including cathepsin L, papain and cathepsin B. This protein has no toxic activity and its function in the venom is unknown. It may play a role as a housekeeping or regulatory protein. This is Cystatin from Pseudechis porphyriacus (Red-bellied black snake).